A 95-amino-acid chain; its full sequence is PqqA binding protein (95 aa).

Belongs to the PqqD family. Monomer. Interacts with PqqE.

It functions in the pathway cofactor biosynthesis; pyrroloquinoline quinone biosynthesis. Functions as a PqqA binding protein and presents PqqA to PqqE, in the pyrroloquinoline quinone (PQQ) biosynthetic pathway. This Rahnella aquatilis protein is PqqA binding protein.